We begin with the raw amino-acid sequence, 380 residues long: Anhydro-N-acetylmuramic acid kinase (380 aa).

17–24 contacts ATP; it reads GTSMDGAD.

The protein belongs to the anhydro-N-acetylmuramic acid kinase family.

The enzyme catalyses 1,6-anhydro-N-acetyl-beta-muramate + ATP + H2O = N-acetyl-D-muramate 6-phosphate + ADP + H(+). The protein operates within amino-sugar metabolism; 1,6-anhydro-N-acetylmuramate degradation. Its pathway is cell wall biogenesis; peptidoglycan recycling. Functionally, catalyzes the specific phosphorylation of 1,6-anhydro-N-acetylmuramic acid (anhMurNAc) with the simultaneous cleavage of the 1,6-anhydro ring, generating MurNAc-6-P. Is required for the utilization of anhMurNAc either imported from the medium or derived from its own cell wall murein, and thus plays a role in cell wall recycling. The polypeptide is Anhydro-N-acetylmuramic acid kinase (Cupriavidus metallidurans (strain ATCC 43123 / DSM 2839 / NBRC 102507 / CH34) (Ralstonia metallidurans)).